Here is a 205-residue protein sequence, read N- to C-terminus: MPIFFYLFTTLIIISSLCVVLSKNSVYSVLWLIFTFINAAGLMILLGAEFLAMLLIVIYVGAVAVLFLFVIMMLDINFNQAITKLRENLSLSIFITLIMFVDLVITVILSTKNINHSSNISFAIANNISNTKAIGSVLYTDFMLPFQMAGLILFVAMISCITLTLKKRERVKYQDIRKQLSHNKGNVILMTKPILNKGVENIKYE.

Helical transmembrane passes span 1–21, 26–46, 54–74, 89–109, and 142–162; these read MPIF…CVVL, VYSV…MILL, LLIV…IMML, LSLS…TVIL, and FMLP…SCIT.

This sequence belongs to the complex I subunit 6 family.

It is found in the cell membrane. It catalyses the reaction a quinone + NADH + 5 H(+)(in) = a quinol + NAD(+) + 4 H(+)(out). Functionally, NDH-1 shuttles electrons from NADH, via FMN and iron-sulfur (Fe-S) centers, to quinones in the respiratory chain. Couples the redox reaction to proton translocation (for every two electrons transferred, four hydrogen ions are translocated across the cytoplasmic membrane), and thus conserves the redox energy in a proton gradient. The chain is NADH-quinone oxidoreductase subunit J (nuoJ) from Rickettsia typhi (strain ATCC VR-144 / Wilmington).